A 103-amino-acid polypeptide reads, in one-letter code: Antitoxin VapB1 (103 aa).

Functionally, antitoxin component of a type II toxin-antitoxin (TA) system. Upon expression in E.coli neutralizes the effect of cognate toxin VapC1, partially inhibits the RNase activity of VapC1 in vitro. This Rickettsia felis (strain ATCC VR-1525 / URRWXCal2) (Rickettsia azadi) protein is Antitoxin VapB1 (vapB1).